Consider the following 405-residue polypeptide: Cystathionine gamma-lyase (405 aa).

Substrate contacts are provided by arginine 62, tyrosine 114, and arginine 119. At lysine 212 the chain carries N6-(pyridoxal phosphate)lysine. Residue glutamate 339 coordinates substrate.

Belongs to the trans-sulfuration enzymes family. In terms of assembly, homotetramer. Interacts with CALM in a calcium-dependent manner. Pyridoxal 5'-phosphate serves as cofactor. Highly expressed in liver. Also in muscle and lower expression in most tissues except heart, pituitary gland, spleen, thymus, and vascular tissue, where it is hardly detected.

It is found in the cytoplasm. The catalysed reaction is L,L-cystathionine + H2O = 2-oxobutanoate + L-cysteine + NH4(+). It carries out the reaction L-cysteine + H2O = hydrogen sulfide + pyruvate + NH4(+) + H(+). The enzyme catalyses L-homocysteine + H2O = 2-oxobutanoate + hydrogen sulfide + NH4(+) + H(+). It catalyses the reaction L-homoserine = 2-oxobutanoate + NH4(+). The catalysed reaction is L-selenocystathionine + H2O = L-selenocysteine + 2-oxobutanoate + NH4(+). Its pathway is amino-acid biosynthesis; L-cysteine biosynthesis; L-cysteine from L-homocysteine and L-serine: step 2/2. Inhibited by propargylglycine, trifluoroalanine and aminoethoxyvinylglycine. Catalyzes the last step in the trans-sulfuration pathway from L-methionine to L-cysteine in a pyridoxal-5'-phosphate (PLP)-dependent manner, which consists on cleaving the L,L-cystathionine molecule into L-cysteine, ammonia and 2-oxobutanoate. Part of the L-cysteine derived from the trans-sulfuration pathway is utilized for biosynthesis of the ubiquitous antioxidant glutathione. Besides its role in the conversion of L-cystathionine into L-cysteine, it utilizes L-cysteine and L-homocysteine as substrates (at much lower rates than L,L-cystathionine) to produce the endogenous gaseous signaling molecule hydrogen sulfide (H2S). In vitro, it converts two L-cysteine molecules into lanthionine and H2S, also two L-homocysteine molecules to homolanthionine and H2S, which can be particularly relevant under conditions of severe hyperhomocysteinemia (which is a risk factor for cardiovascular disease, diabetes, and Alzheimer's disease). Lanthionine and homolanthionine are structural homologs of L,L-cystathionine that differ by the absence or presence of an extra methylene group, respectively. Acts as a cysteine-protein sulfhydrase by mediating sulfhydration of target proteins: sulfhydration consists of converting -SH groups into -SSH on specific cysteine residues of target proteins such as GAPDH, PTPN1 and NF-kappa-B subunit RELA, thereby regulating their function. By generating the gasotransmitter H2S, it participates in a number of physiological processes such as vasodilation, bone protection, and inflammation. Plays an essential role in myogenesis by contributing to the biogenesis of H2S in skeletal muscle tissue. Can also accept homoserine as substrate. Catalyzes the elimination of selenocystathionine (which can be derived from the diet) to yield selenocysteine, ammonia and 2-oxobutanoate. This Homo sapiens (Human) protein is Cystathionine gamma-lyase (CTH).